A 450-amino-acid chain; its full sequence is Ceramide glucosyltransferase (450 aa).

At 1–8 (MSDSGTLS) the chain is on the lumenal side. The helical transmembrane segment at 9–29 (LIGGIVFLVLWVVVWSICLLG) threads the bilayer. Residues 30 to 337 (WRTARIRYAH…IRVRKKMTLA (308 aa)) lie on the Cytoplasmic side of the membrane. A short sequence motif (D1) is located at residue D96. Position 148 (D148) is a short sequence motif, D2. A short sequence motif (D3) is located at residue D286. The Proton acceptor role is filled by D286. The (Q/R)XXRW motif lies at 323–327 (RRVRW). A helical transmembrane segment spans residues 338–358 (ATLLEPLTESIISGLYGAWAI). Topologically, residues 359 to 361 (SRL) are lumenal. Residues 362–382 (LGGNILPLFLLHMAAWISVDI) traverse the membrane as a helical segment. Residues 383 to 401 (STKRALETNIKGIGPPESK) are Cytoplasmic-facing. A helical transmembrane segment spans residues 402-422 (VTFLMAWAARECLALPIWMLA). Topologically, residues 423 to 450 (MTSSEVVWRGQKYKIIASGEAIRLGDRN) are lumenal.

Belongs to the glycosyltransferase 2 family.

It localises to the golgi apparatus membrane. The enzyme catalyses an N-acylsphing-4-enine + UDP-alpha-D-glucose = a beta-D-glucosyl-(1&lt;-&gt;1')-N-acylsphing-4-enine + UDP + H(+). Its pathway is lipid metabolism; sphingolipid metabolism. In terms of biological role, catalyzes the final step in the biosynthesis of the membrane lipid glucosylceramide (GluCer), the transfer of glucose to ceramide. Glucosylceramides play important roles in growth, differentiation and pathogenicity. Essential factor in determining the success of fungal infection by regulating survival of yeast cells during the initial colonization of the host lung. This chain is Ceramide glucosyltransferase, found in Cryptococcus neoformans var. grubii serotype A (strain H99 / ATCC 208821 / CBS 10515 / FGSC 9487) (Filobasidiella neoformans var. grubii).